The primary structure comprises 471 residues: GLPGRKGPVGDAGPPGQLGVTGPQGAPGFPGVTIPGQKGDRGPPGSRGNPGMPGPPGPPGSPVEGIKGDKGLMGEPGQRGPPGAIGDMGSPGHPGAPGVPGQPGARGDPGFYGFPGMKGKKGNSGFPGPPGPPGQSGPKGPPGVRGEPGTVKIISLPGSPGPPGSAGEPGMQGEPGPPGPPGDPGPCGPKGKPGEDGPPGTPGPTGEKGNKGCKGEQGPPGSDGLPGLKGKPGDTGPPAAGAVMRGFVFTRHSQTTAIPSCPEGTEPLYSGFSLLFVQGNEQAHGQDLGTLGSCLQRFTTMPFLFCNINDVCNFASRNDYSYWLSTPAMIPMDMAPITGRALEPYISRCTVCEGPAIAIAVHSQTTDIPPCPAGWISLWKGFSFIMFTSAGSEGAGQALASPGSCLEEFRASPFIECHGRGTCNYYSNSYSFWLASLDPKRMFRKPIPSTVKAGELENIISRCQVCMKMRP.

Residues 1–238 are triple-helical region; that stretch reads GLPGRKGPVG…KGKPGDTGPP (238 aa). The tract at residues 1 to 241 is disordered; that stretch reads GLPGRKGPVG…PGDTGPPAAG (241 aa). Residues 52 to 61 are compositionally biased toward pro residues; that stretch reads MPGPPGPPGS. The short motif at 106 to 108 is the Cell attachment site element; sequence RGD. The segment covering 127-141 has biased composition (pro residues); that stretch reads PGPPGPPGQSGPKGP. A compositionally biased stretch (low complexity) spans 165–174; it reads SAGEPGMQGE. Residues 175 to 187 show a composition bias toward pro residues; that stretch reads PGPPGPPGDPGPC. Proline 232 and proline 238 each carry hydroxyproline. Residues 246-470 form the Collagen IV NC1 domain; the sequence is GFVFTRHSQT…SRCQVCMKMR (225 aa). Intrachain disulfides connect cysteine 261–cysteine 352, cysteine 294–cysteine 349, cysteine 306–cysteine 312, cysteine 371–cysteine 466, cysteine 405–cysteine 463, and cysteine 417–cysteine 423. Methionine 334 is covalently cross-linked (S-Lysyl-methionine sulfilimine (Met-Lys) (interchain with K-452)). An S-Lysyl-methionine sulfilimine (Lys-Met) (interchain with M-334) cross-link involves residue lysine 452.

This sequence belongs to the type IV collagen family. There are six type IV collagen isoforms, alpha 1(IV)-alpha 6(IV), each of which can form a triple helix structure with 2 other chains to generate type IV collagen network. The alpha 3(IV) chain forms a triple helical protomer with alpha 4(IV) and alpha 5(IV); this triple helical structure dimerizes through NC1-NC1 domain interactions such that the alpha 3(IV), alpha 4(IV) and alpha 5(IV) chains of one protomer connect with the alpha 5(IV), alpha 4(IV) and alpha 3(IV) chains of the opposite promoter, respectively. Interacts with ITGB3. Associates with LAMB2 at the neuromuscular junction and in GBM. Prolines at the third position of the tripeptide repeating unit (G-X-Y) are hydroxylated in some or all of the chains. Post-translationally, type IV collagens contain numerous cysteine residues which are involved in inter- and intramolecular disulfide bonding. 12 of these, located in the NC1 domain, are conserved in all known type IV collagens. In terms of processing, the trimeric structure of the NC1 domains is stabilized by covalent bonds between Lys and Met residues. Phosphorylated. Thought to be phosphorylated by CERT, but CERT does not have kinase activity.

It localises to the secreted. It is found in the extracellular space. Its subcellular location is the extracellular matrix. The protein resides in the basement membrane. Its function is as follows. Type IV collagen is the major structural component of glomerular basement membranes (GBM), forming a 'chicken-wire' meshwork together with laminins, proteoglycans and entactin/nidogen. This chain is Collagen alpha-3(IV) chain (COL4A3), found in Bos taurus (Bovine).